Reading from the N-terminus, the 127-residue chain is Fatty acid binding protein 1-A, liver (127 aa).

This sequence belongs to the calycin superfamily. Fatty-acid binding protein (FABP) family. In terms of tissue distribution, in adults, weakly expressed in the intestine.

It is found in the cytoplasm. Binds free fatty acids and their coenzyme A derivatives, bilirubin, and some other small molecules in the cytoplasm. May be involved in intracellular lipid transport. The protein is Fatty acid binding protein 1-A, liver of Danio rerio (Zebrafish).